Consider the following 894-residue polypeptide: Peroxisomal hydratase-dehydrogenase-epimerase (894 aa).

Short-chain dehydrogenase like regions lie at residues R6–N230 and D311–K523. NADP(+) contacts are provided by V14, K53, N99, R132, Y164, K168, and A197. Y164 serves as the catalytic Proton acceptor. Catalysis depends on K168, which acts as the Lowers pKa of active site Tyr. Y458 acts as the Proton acceptor in catalysis. (3R)-3-hydroxydecanoyl-CoA-binding residues include H693, G694, and K723. The disordered stretch occupies residues K763 to P782. A MaoC-like domain is found at K776–S887. The (3R)-3-hydroxydecanoyl-CoA site is built by D803, N805, G826, F851, and G853.

This sequence belongs to the short-chain dehydrogenases/reductases (SDR) family. Monomer.

It is found in the peroxisome. The enzyme catalyses a (3R)-3-hydroxyacyl-CoA = a (2E)-enoyl-CoA + H2O. It catalyses the reaction a (3R)-3-hydroxyacyl-CoA + NAD(+) = a 3-oxoacyl-CoA + NADH + H(+). Its pathway is lipid metabolism; fatty acid beta-oxidation. In terms of biological role, second trifunctional enzyme acting on the beta-oxidation pathway for fatty acids, possessing hydratase-dehydrogenase-epimerase activities. Converts trans-2-enoyl-CoA via D-3-hydroxyacyl-CoA to 3-ketoacyl-CoA. This Neurospora crassa (strain ATCC 24698 / 74-OR23-1A / CBS 708.71 / DSM 1257 / FGSC 987) protein is Peroxisomal hydratase-dehydrogenase-epimerase (fox-2).